Here is a 395-residue protein sequence, read N- to C-terminus: Cystathionine beta-lyase (395 aa).

K210 carries the post-translational modification N6-(pyridoxal phosphate)lysine.

This sequence belongs to the trans-sulfuration enzymes family. In terms of assembly, homotetramer. Pyridoxal 5'-phosphate serves as cofactor.

It is found in the cytoplasm. It catalyses the reaction L,L-cystathionine + H2O = L-homocysteine + pyruvate + NH4(+). The catalysed reaction is an S-substituted L-cysteine + H2O = a thiol + pyruvate + NH4(+). It functions in the pathway amino-acid biosynthesis; L-methionine biosynthesis via de novo pathway; L-homocysteine from L-cystathionine: step 1/1. Catalyzes the cleavage of cystathionine to homocysteine, pyruvate and ammonia during methionine biosynthesis. This is Cystathionine beta-lyase (metC) from Salmonella typhimurium (strain LT2 / SGSC1412 / ATCC 700720).